Reading from the N-terminus, the 387-residue chain is MKKKILLLGSGELGKEFVIAAQRLGQYVIAVDSYDDAPAMQVAHEKEIINMLDGNLLDQIIAKHKPDLIVPEIEAIKTERFYEYEKQGYQVVPSAKAANFTMNRKSIRDLAAKDLKLLTAKYAYASSIDELIKATEILGFPCVVKPLMSSSGKGQSVIQSREEISKAWEASQTKGRAGAAEIIVEEFIPFESEITLLTVTQKNGKTLFCPPIGHRQERGDYQESWQPAAISEVQLKEAQRMADAVTKELTGFGIWGVEFFLTEDKVYFSELSPRPHDTGMVTLAGTQNFNEFELHLRAILGIPILEITLERKGASAVILASTENKTPEISGLDIASGMSESDFRIFGKPITRPYRRMGVTLSYSTKGEEISSLRKRAVLLASKIKVD.

N(1)-(5-phospho-beta-D-ribosyl)glycinamide contacts are provided by residues 12-13 (EL) and E72. ATP-binding positions include R104, K145, 150 to 155 (SSGKGQ), 185 to 188 (EEFI), and E193. The ATP-grasp domain maps to 109 to 300 (DLAAKDLKLL…EFELHLRAIL (192 aa)). Mg(2+)-binding residues include E258 and E270. Residues D277, K348, and 355–356 (RR) each bind N(1)-(5-phospho-beta-D-ribosyl)glycinamide.

Belongs to the PurK/PurT family. In terms of assembly, homodimer.

It catalyses the reaction N(1)-(5-phospho-beta-D-ribosyl)glycinamide + formate + ATP = N(2)-formyl-N(1)-(5-phospho-beta-D-ribosyl)glycinamide + ADP + phosphate + H(+). It functions in the pathway purine metabolism; IMP biosynthesis via de novo pathway; N(2)-formyl-N(1)-(5-phospho-D-ribosyl)glycinamide from N(1)-(5-phospho-D-ribosyl)glycinamide (formate route): step 1/1. Functionally, involved in the de novo purine biosynthesis. Catalyzes the transfer of formate to 5-phospho-ribosyl-glycinamide (GAR), producing 5-phospho-ribosyl-N-formylglycinamide (FGAR). Formate is provided by PurU via hydrolysis of 10-formyl-tetrahydrofolate. The polypeptide is Formate-dependent phosphoribosylglycinamide formyltransferase (Leptospira interrogans serogroup Icterohaemorrhagiae serovar copenhageni (strain Fiocruz L1-130)).